The primary structure comprises 640 residues: Probable potassium transport system protein Kup 2 (640 aa).

Transmembrane regions (helical) follow at residues 19–39 (LFSS…YGDI), 67–87 (VLSL…VVFV), 118–138 (GVVA…GVIT), 155–175 (EAAK…LFLV), 181–201 (GVIG…IAAL), 230–250 (FVGV…EALY), 265–285 (WLGL…ALLL), 307–327 (MVCL…SGVF), 355–375 (VYIP…VLVF), 384–404 (AYGI…FFVI), 415–435 (AVPL…ANLF), and 437–457 (IFDG…SMIT).

Belongs to the HAK/KUP transporter (TC 2.A.72) family.

The protein resides in the cell inner membrane. The catalysed reaction is K(+)(in) + H(+)(in) = K(+)(out) + H(+)(out). Its function is as follows. Transport of potassium into the cell. Likely operates as a K(+):H(+) symporter. In Syntrophobacter fumaroxidans (strain DSM 10017 / MPOB), this protein is Probable potassium transport system protein Kup 2.